Here is a 1209-residue protein sequence, read N- to C-terminus: DNA-directed RNA polymerase subunit beta'' (1209 aa).

Zn(2+) contacts are provided by Cys233, Cys308, Cys315, and Cys318.

The protein belongs to the RNA polymerase beta' chain family. RpoC2 subfamily. In terms of assembly, in plastids the minimal PEP RNA polymerase catalytic core is composed of four subunits: alpha, beta, beta', and beta''. When a (nuclear-encoded) sigma factor is associated with the core the holoenzyme is formed, which can initiate transcription. It depends on Zn(2+) as a cofactor.

Its subcellular location is the plastid. The protein localises to the chloroplast. The catalysed reaction is RNA(n) + a ribonucleoside 5'-triphosphate = RNA(n+1) + diphosphate. In terms of biological role, DNA-dependent RNA polymerase catalyzes the transcription of DNA into RNA using the four ribonucleoside triphosphates as substrates. The chain is DNA-directed RNA polymerase subunit beta'' from Pinus koraiensis (Korean pine).